The sequence spans 206 residues: uncharacterized protein (206 aa).

An N-terminal signal peptide occupies residues 1–17 (MKGKILFALFLSAGVIA). Residue Cys-18 is the site of N-palmitoyl cysteine attachment. A lipid anchor (S-diacylglycerol cysteine) is attached at Cys-18. A coiled-coil region spans residues 21 to 58 (ASQAAKQQEVKVAKAETKTKKKESKAEKFRKALAAQDK). A Cytochrome c domain is found at 97–201 (GDWRKGESLA…DIVAYLHDPE (105 aa)). The heme c site is built by Cys-127, Cys-130, and His-131.

It localises to the cell membrane. This is an uncharacterized protein from Aquifex aeolicus (strain VF5).